The sequence spans 219 residues: Cytochrome b6 (219 aa).

The helical transmembrane segment at 32-52 (IFYCFGGIVLTAFIFQGASGF) threads the bilayer. Cys35 contributes to the heme c binding site. Residues His86 and His100 each coordinate heme b. Transmembrane regions (helical) follow at residues 90-110 (SGCMVLVLILHISRVYLTGGF), 116-136 (LTWISGVILAVVTVSFGVTGY), and 190-210 (IHTFVLPLVTLVLLIVHFSLL). Positions 191 and 206 each coordinate heme b.

This sequence belongs to the cytochrome b family. PetB subfamily. The 4 large subunits of the cytochrome b6-f complex are cytochrome b6, subunit IV (17 kDa polypeptide, PetD), cytochrome f and the Rieske protein, while the 4 small subunits are PetG, PetL, PetM and PetN. The complex functions as a dimer. Requires heme b as cofactor. It depends on heme c as a cofactor.

It localises to the plastid. It is found in the chloroplast thylakoid membrane. Component of the cytochrome b6-f complex, which mediates electron transfer between photosystem II (PSII) and photosystem I (PSI), cyclic electron flow around PSI, and state transitions. The protein is Cytochrome b6 of Heterocapsa triquetra (Dinoflagellate).